The sequence spans 216 residues: Small ribosomal subunit protein uS3c (216 aa).

The KH type-2 domain occupies 39–109; that stretch reads IRSYINRELE…SIRINVIELT (71 aa).

This sequence belongs to the universal ribosomal protein uS3 family. In terms of assembly, part of the 30S ribosomal subunit.

The protein resides in the plastid. The protein localises to the chloroplast. The chain is Small ribosomal subunit protein uS3c (rps3) from Guillardia theta (Cryptophyte).